A 149-amino-acid chain; its full sequence is Glutamate mutase sigma subunit (149 aa).

Residues Lys-3–Val-140 enclose the B12-binding domain. Residues Ala-13–Ala-17, His-16, Ser-61–Ile-63, and Asn-93–Gly-97 contribute to the adenosylcob(III)alamin site.

It belongs to the methylaspartate mutase GlmS subunit family. As to quaternary structure, heterotetramer composed of 2 epsilon subunits (GlmE) and 2 sigma subunits (GlmS). GlmE exists as a homodimer and GlmS as a monomer. It depends on adenosylcob(III)alamin as a cofactor.

It carries out the reaction (2S,3S)-3-methyl-L-aspartate = L-glutamate. It participates in amino-acid degradation; L-glutamate degradation via mesaconate pathway; acetate and pyruvate from L-glutamate: step 1/4. Functionally, catalyzes the carbon skeleton rearrangement of L-glutamate to L-threo-3-methylaspartate ((2S,3S)-3-methylaspartate). The sequence is that of Glutamate mutase sigma subunit from Escherichia coli O157:H7.